Consider the following 1239-residue polypeptide: Inner tegument protein (1239 aa).

4 disordered regions span residues 1–20 (MASA…DAQP), 669–704 (GESP…GGGP), 959–980 (RPPP…DTPP), and 1087–1239 (GRNA…AEDE). The tract at residues 615–1239 (NELPKTRSLA…RPPRPTAEDE (625 aa)) is interaction with large tegument protein. Positions 1112 to 1123 (DSSPFSFSSSDF) are enriched in low complexity. Over residues 1139 to 1148 (VPGGGGGGEG) the composition is skewed to gly residues. Basic and acidic residues predominate over residues 1151–1170 (EEERERPSDIDTAARARKVE). A compositionally biased stretch (low complexity) spans 1180–1189 (RTTPSPSRRA). The segment covering 1219-1232 (VRPRTRRGATRRPP) has biased composition (basic residues).

The protein belongs to the herpesviridae inner tegument protein family. Interacts (via C-terminus) with the large tegument protein/LTP (via N-terminus).

It is found in the virion tegument. The protein localises to the host cytoplasm. It localises to the host nucleus. The protein resides in the host Golgi apparatus. Its subcellular location is the host trans-Golgi network. In terms of biological role, plays an essential role in cytoplasmic secondary envelopment during viral egress. Interacts with the capsid via the large tegument protein/LTP and participates in its transport to the host trans-Golgi network (TGN) where secondary envelopment occurs. Modulates tegumentation and capsid accumulation at the viral assembly complex. The protein is Inner tegument protein of Homo sapiens (Human).